The sequence spans 379 residues: Queuine tRNA-ribosyltransferase (379 aa).

The active-site Proton acceptor is the Asp-94. Substrate-binding positions include 94-98, Asp-148, Gln-191, and Gly-218; that span reads DSGGF. Residues 249–255 form an RNA binding region; that stretch reads GVGSPDS. Asp-268 (nucleophile) is an active-site residue. The tract at residues 273–277 is RNA binding; important for wobble base 34 recognition; sequence TRIAR. Residues Cys-306, Cys-308, Cys-311, and His-337 each contribute to the Zn(2+) site.

This sequence belongs to the queuine tRNA-ribosyltransferase family. As to quaternary structure, homodimer. Within each dimer, one monomer is responsible for RNA recognition and catalysis, while the other monomer binds to the replacement base PreQ1. Requires Zn(2+) as cofactor.

The enzyme catalyses 7-aminomethyl-7-carbaguanine + guanosine(34) in tRNA = 7-aminomethyl-7-carbaguanosine(34) in tRNA + guanine. It participates in tRNA modification; tRNA-queuosine biosynthesis. In terms of biological role, catalyzes the base-exchange of a guanine (G) residue with the queuine precursor 7-aminomethyl-7-deazaguanine (PreQ1) at position 34 (anticodon wobble position) in tRNAs with GU(N) anticodons (tRNA-Asp, -Asn, -His and -Tyr). Catalysis occurs through a double-displacement mechanism. The nucleophile active site attacks the C1' of nucleotide 34 to detach the guanine base from the RNA, forming a covalent enzyme-RNA intermediate. The proton acceptor active site deprotonates the incoming PreQ1, allowing a nucleophilic attack on the C1' of the ribose to form the product. After dissociation, two additional enzymatic reactions on the tRNA convert PreQ1 to queuine (Q), resulting in the hypermodified nucleoside queuosine (7-(((4,5-cis-dihydroxy-2-cyclopenten-1-yl)amino)methyl)-7-deazaguanosine). The chain is Queuine tRNA-ribosyltransferase from Bacillus cereus (strain G9842).